Consider the following 549-residue polypeptide: MKRVLTALAATLPFAANAADALTGAVERQPTNWQAIIMFLIFVLLTLYITYWASKRVRSRNDYYTAGGNITGFQNGLAIAGDFMSAASFLGISALVYTSGYDGLIYSLGFLVGWPIILFLIAERLRNLGRYTFADVASYRLKQGPIRTLSACGSLVVVALYLIAQMVGAGKLIQLLFGLNYHIAVVLVGVLMVMYVLFGGMLATTWVQIIKAVLLLFGASFMAFMVMKHVGFSFNNLFTQAMAVHPKGEAIMSPGGLVKDPISALSLGLGLMFGTAGLPHILMRFFTVSDAREARKSVFYATGFMGYFYILTFIIGFGAIMLVGANPAFKDAAGTLIGGNNMAAVHLADAVGGNLFLGFISAVAFATILAVVAGLTLAGASAVSHDLYANVWRKGATERQELKVSKITVLILGVVAILLGILFENQNIAFMVGLAFSIAASCNFPIILLSMYWSKLTTRGAMIGGWLGLLTAVILMVLGPTIWVQILGHEKAIFPYEYPALFSIAVAFIGIWFFSATDNSAEGKLEREKFRAQFIRSQTGLGIDQGRAH.

13 consecutive transmembrane segments (helical) span residues 33–53, 76–96, 103–123, 149–169, 183–203, 206–226, 262–282, 303–323, 355–375, 404–424, 428–448, 463–483, and 493–513; these read WQAI…TYWA, GLAI…SALV, GLIY…LIAE, LSAC…MVGA, IAVV…GMLA, WVQI…AFMV, ISAL…PHIL, GFMG…IMLV, LFLG…VAGL, VSKI…ILFE, IAFM…PIIL, IGGW…PTIW, and IFPY…GIWF.

The protein belongs to the sodium:solute symporter (SSF) (TC 2.A.21) family.

It is found in the cell inner membrane. Transports acetate. This Enterobacter sp. (strain 638) protein is Cation/acetate symporter ActP.